The sequence spans 200 residues: Rho-related protein racH (200 aa).

11-18 provides a ligand contact to GTP; it reads GDMSVGKT. The Effector region motif lies at 33–41; that stretch reads YVPTVFDNY. GTP is bound by residues 58-62 and 117-120; these read DTAGS and TKLD. Residues 178–200 are disordered; that stretch reads EELAKSKKDSKKGDKDSKDCIIQ. A Cysteine methyl ester modification is found at cysteine 197. Cysteine 197 carries S-geranylgeranyl cysteine lipidation. Positions 198 to 200 are cleaved as a propeptide — removed in mature form; that stretch reads IIQ.

The protein belongs to the small GTPase superfamily. Rho family.

The protein localises to the cell membrane. This chain is Rho-related protein racH (racH), found in Dictyostelium discoideum (Social amoeba).